We begin with the raw amino-acid sequence, 576 residues long: CDPK-related kinase 1 (576 aa).

Positions 1 to 39 are disordered; the sequence is MGICHGKPVEQQSKSLPVSGETNEAPTNSQPPAKSSGFP. Glycine 2 carries the N-myristoyl glycine lipid modification. Residues 10 to 33 show a composition bias toward polar residues; the sequence is EQQSKSLPVSGETNEAPTNSQPPA. A Protein kinase domain is found at 123 to 385; sequence YEIDGEVGRG…AAQALCHPWL (263 aa). Residues 129–137 and lysine 155 contribute to the ATP site; that span reads VGRGHFGYT. The active-site Proton acceptor is the aspartate 251. Serine 291 is subject to Phosphoserine. Serine 333 carries the post-translational modification Phosphoserine; by CPK1 and CPK34. The tract at residues 390 to 420 is autoinhibitory domain; it reads ELKIPSDMIIYKLVKVYIMSTSLRKSALAAL. The tract at residues 409-429 is calmodulin binding (CaMBD); sequence STSLRKSALAALAKTLTVPQL. EF-hand domains are found at residues 427 to 463, 464 to 499, 500 to 539, and 542 to 571; these read PQLAYLREQFTLLGPSKNGYISMQNYKTAILKSSTDA, MKDSRVFDFVHMISCLQYKKLDFEEFCASALSVYQL, EAMETWEQHARRAYELFEKDGNRPIMIEELASELGLGPSV, and HVVLQDWIRHSDGKLSFLGFVRLLHGVSSR. Residues serine 442, asparagine 444, tyrosine 446, lysine 483, glutamate 488, aspartate 519, asparagine 521, glutamate 528, aspartate 553, and lysine 555 each coordinate Ca(2+). Serine 557 bears the Phosphoserine mark.

Belongs to the protein kinase superfamily. Ser/Thr protein kinase family. CDPK subfamily. Binds calmodulin (CaM) in a calcium-dependent manner. Interacts with HSFA1A. In terms of processing, autophosphorylated.

Its subcellular location is the membrane. The enzyme catalyses L-seryl-[protein] + ATP = O-phospho-L-seryl-[protein] + ADP + H(+). It carries out the reaction L-threonyl-[protein] + ATP = O-phospho-L-threonyl-[protein] + ADP + H(+). Its activity is regulated as follows. Activated by calcium and calmodulin. Autophosphorylation may play an important role in the regulation of the kinase activity. Functionally, may play a role in signal transduction pathways that involve calcium as a second messenger. Serine/threonine kinase that phosphorylates histone H3. Confers thermotolerance; involved in the heat-shock-mediated calmodulin-dependent signal transduction leading to the activation of heat-shock transcription factors (HSFs); phosphorylates HSFA1A. The chain is CDPK-related kinase 1 (CRK1) from Arabidopsis thaliana (Mouse-ear cress).